A 588-amino-acid polypeptide reads, in one-letter code: Proline--tRNA ligase (588 aa).

Belongs to the class-II aminoacyl-tRNA synthetase family. ProS type 1 subfamily. In terms of assembly, homodimer.

The protein localises to the cytoplasm. The catalysed reaction is tRNA(Pro) + L-proline + ATP = L-prolyl-tRNA(Pro) + AMP + diphosphate. In terms of biological role, catalyzes the attachment of proline to tRNA(Pro) in a two-step reaction: proline is first activated by ATP to form Pro-AMP and then transferred to the acceptor end of tRNA(Pro). As ProRS can inadvertently accommodate and process non-cognate amino acids such as alanine and cysteine, to avoid such errors it has two additional distinct editing activities against alanine. One activity is designated as 'pretransfer' editing and involves the tRNA(Pro)-independent hydrolysis of activated Ala-AMP. The other activity is designated 'posttransfer' editing and involves deacylation of mischarged Ala-tRNA(Pro). The misacylated Cys-tRNA(Pro) is not edited by ProRS. The polypeptide is Proline--tRNA ligase (Helicobacter hepaticus (strain ATCC 51449 / 3B1)).